Reading from the N-terminus, the 390-residue chain is UPF0496 protein At1g20180 (390 aa).

2 helical membrane-spanning segments follow: residues 228–248 and 250–270; these read LGGYSLVITHSAIVITLLIIA and HSILGVFAAPALLGLCSFCLL.

This sequence belongs to the UPF0496 family.

The protein resides in the membrane. This chain is UPF0496 protein At1g20180, found in Arabidopsis thaliana (Mouse-ear cress).